The following is a 49-amino-acid chain: Large ribosomal subunit protein bL33B (49 aa).

This sequence belongs to the bacterial ribosomal protein bL33 family.

The polypeptide is Large ribosomal subunit protein bL33B (Bacillus pumilus (strain SAFR-032)).